A 218-amino-acid polypeptide reads, in one-letter code: ATP-dependent dethiobiotin synthetase BioD (218 aa).

Position 10–15 (10–15 (NAGKTT)) interacts with ATP. Threonine 14 lines the Mg(2+) pocket. Lysine 35 is a catalytic residue. Threonine 39 contributes to the substrate binding site. A Mg(2+)-binding site is contributed by glutamate 116. ATP-binding positions include 116–119 (EGAG) and 176–177 (LR).

Belongs to the dethiobiotin synthetase family. Homodimer. Mg(2+) serves as cofactor.

The protein resides in the cytoplasm. It carries out the reaction (7R,8S)-7,8-diammoniononanoate + CO2 + ATP = (4R,5S)-dethiobiotin + ADP + phosphate + 3 H(+). It functions in the pathway cofactor biosynthesis; biotin biosynthesis; biotin from 7,8-diaminononanoate: step 1/2. Catalyzes a mechanistically unusual reaction, the ATP-dependent insertion of CO2 between the N7 and N8 nitrogen atoms of 7,8-diaminopelargonic acid (DAPA, also called 7,8-diammoniononanoate) to form a ureido ring. In Helicobacter pylori (strain J99 / ATCC 700824) (Campylobacter pylori J99), this protein is ATP-dependent dethiobiotin synthetase BioD.